Consider the following 106-residue polypeptide: UPF0145 protein PFL_3418 (106 aa).

Belongs to the UPF0145 family.

The polypeptide is UPF0145 protein PFL_3418 (Pseudomonas fluorescens (strain ATCC BAA-477 / NRRL B-23932 / Pf-5)).